The chain runs to 856 residues: Lon protease homolog 2, peroxisomal (856 aa).

In terms of domain architecture, Lon N-terminal spans leucine 13–isoleucine 222. Glycine 379–threonine 386 contacts ATP. Residues glycine 586–valine 608 are compositionally biased toward basic and acidic residues. The segment at glycine 586–serine 614 is disordered. Residues leucine 655 to glycine 841 enclose the Lon proteolytic domain. Active-site residues include serine 747 and lysine 790. The short motif at serine 854–leucine 856 is the Microbody targeting signal element.

The protein belongs to the peptidase S16 family.

It is found in the peroxisome matrix. It catalyses the reaction Hydrolysis of proteins in presence of ATP.. Functionally, ATP-dependent serine protease that mediates the selective degradation of misfolded and unassembled polypeptides in the peroxisomal matrix. Necessary for type 2 peroxisome targeting signal (PTS2)-containing protein processing and facilitates peroxisome matrix protein import. This chain is Lon protease homolog 2, peroxisomal (lonp2), found in Xenopus laevis (African clawed frog).